The following is a 91-amino-acid chain: ATP-dependent Clp protease adapter protein ClpS (91 aa).

It belongs to the ClpS family. As to quaternary structure, binds to the N-terminal domain of the chaperone ClpA.

Its function is as follows. Involved in the modulation of the specificity of the ClpAP-mediated ATP-dependent protein degradation. This chain is ATP-dependent Clp protease adapter protein ClpS, found in Helicobacter pylori (strain ATCC 700392 / 26695) (Campylobacter pylori).